A 251-amino-acid polypeptide reads, in one-letter code: MRILIILSIILCSFFARADLEYIDNDIYNYNGGRNENGCLEVYDPYEKFNRKVFAFNSVLDHIILRPLAVGYKNITNDYIKARVNSFVSNVYTPLTAVNYGLQLNYDKTIKSVWRFLINTTLGIGGLFDVASKVGLQSDRQTFGSTLAHYGVAPGPYLVLPIIGSTNARDMTDSVITNYAINPLMYYTHNDFDLGILAISKITDRYVVLPFSDYVMKNSTDPYVAIRSALHRTREASVQYPENFKCPKPKN.

The first 18 residues, 1 to 18 (MRILIILSIILCSFFARA), serve as a signal peptide directing secretion.

It belongs to the MlaA family.

This is an uncharacterized protein from Rickettsia typhi (strain ATCC VR-144 / Wilmington).